Here is a 908-residue protein sequence, read N- to C-terminus: MPSSGPGDTSISSLEREDDRKEGEEQEENRGKEERQEPSATARKVGRPGRKRKHPPVESSDTPKDPAVTTKSQPTAQDSGPSDLLPNGDLEKRSEPQPEEGSPAAGQKGGAPAEGEGTETPPEASRAVENGCCVTKEGRGASAGEGKEQKQTNIESMKMEGSRGRLRGGLGWESSLRQRPMPRLTFQAGDPYYISKRKRDEWLARWKREAEKKAKVIAVMNAVEESQASGESQKVEEASPPAVQQPTDPASPTVATTPEPVGADAGDKNATKAADDEPEYEDGRGFGIGELVWGKLRGFSWWPGRIVSWWMTGRSRAAEGTRWVMWFGDGKFSVVCVEKLMPLSSFCSAFHQATYNKQPMYRKAIYEVLQVASSRAGKLFPACHDSDESDTGKAVEVQNKQMIEWALGGFQPSGPKGLEPPEEEKNPYKEVYTDMWVEPEAAAYAPPPPAKKPRKSTTEKPKVKEIIDERTRERLVYEVRQKCRNIEDICISCGSLNVTLEHPLFIGGMCQNCKNCFLECAYQYDDDGYQSYCTICCGGREVLMCGNNNCCRCFCVECVDLLVGPGAAQAAIKEDPWNCYMCGHKGTYGLLRRREDWPSRLQMFFANNHDQEFDPPKVYPPVPAEKRKPIRVLSLFDGIATGLLVLKDLGIQVDRYIASEVCEDSITVGMVRHQGKIMYVGDVRSVTQKHIQEWGPFDLVIGGSPCNDLSIVNPARKGLYEGTGRLFFEFYRLLHDARPKEGDDRPFFWLFENVVAMGVSDKRDISRFLESNPVMIDAKEVSAAHRARYFWGNLPGMNRPLASTVNDKLELQECLEHGRIAKFSKVRTITTRSNSIKQGKDQHFPVFMNEKEDILWCTEMERVFGFPVHYTDVSNMSRLARQRLLGRSWSVPVIRHLFAPLKEYFACV.

Over residues 1 to 13 the composition is skewed to polar residues; that stretch reads MPSSGPGDTSISS. Disordered regions lie at residues 1–183 and 226–281; these read MPSS…PMPR and SQAS…PEYE. Residues 14-37 are compositionally biased toward basic and acidic residues; sequence LEREDDRKEGEEQEENRGKEERQE. A compositionally biased stretch (basic residues) spans 44–54; that stretch reads KVGRPGRKRKH. Over residues 69-80 the composition is skewed to polar residues; that stretch reads TTKSQPTAQDSG. A Phosphoserine modification is found at Ser102. Residues 110-124 show a composition bias toward low complexity; that stretch reads GAPAEGEGTETPPEA. Phosphothreonine is present on Thr120. Lys158 is covalently cross-linked (Glycyl lysine isopeptide (Lys-Gly) (interchain with G-Cter in SUMO2)). The residue at position 167 (Arg167) is an Omega-N-methylarginine. An interaction with DNMT1 and DNMT3B region spans residues 195–399; sequence SKRKRDEWLA…DTGKAVEVQN (205 aa). 2 positions are modified to phosphoserine: Ser239 and Ser251. A compositionally biased stretch (polar residues) spans 242 to 256; it reads AVQQPTDPASPTVAT. At Thr257 the chain carries Phosphothreonine. Positions 257 to 315 constitute a PWWP domain; sequence TPEPVGADAGDKNATKAADDEPEYEDGRGFGIGELVWGKLRGFSWWPGRIVSWWMTGRS. The segment covering 265–275 has biased composition (basic and acidic residues); it reads AGDKNATKAAD. Ser386 and Ser389 each carry phosphoserine. The tract at residues 443–462 is disordered; sequence AYAPPPPAKKPRKSTTEKPK. The ADD domain occupies 478-610; it reads EVRQKCRNIE…LQMFFANNHD (133 aa). Residues 489 to 519 form a GATA-type; atypical zinc finger; that stretch reads ICISCGSLNVTLEHPLFIGGMCQNCKNCFLE. The tract at residues 490-582 is interaction with the PRC2/EED-EZH2 complex; that stretch reads CISCGSLNVT…KEDPWNCYMC (93 aa). A PHD-type; atypical zinc finger spans residues 530 to 586; sequence QSYCTICCGGREVLMCGNNNCCRCFCVECVDLLVGPGAAQAAIKEDPWNCYMCGHKG. Residues 630–908 enclose the SAM-dependent MTase C5-type domain; the sequence is IRVLSLFDGI…APLKEYFACV (279 aa). S-adenosyl-L-methionine is bound by residues 637-641, Glu660, and 682-684; these read DGIAT and DVR. Cys706 is a catalytic residue. Cys706 carries the S-methylcysteine; by autocatalysis modification. 887–889 is an S-adenosyl-L-methionine binding site; sequence RSW.

It belongs to the class I-like SAM-binding methyltransferase superfamily. C5-methyltransferase family. As to quaternary structure, heterotetramer composed of 1 DNMT3A homodimer and 2 DNMT3L subunits (DNMT3L-DNMT3A-DNMT3A-DNMT3L). Interacts with DNMT1 and DNMT3B. Interacts with MPHOSPH8. Interacts with histone H3 that is not methylated at 'Lys-4' (H3K4). Binds the ZBTB18 transcriptional repressor. Interacts with SETDB1. Associates with HDAC1 through its ADD domain. Interacts with UHRF1. Interacts with the PRC2/EED-EZH2 complex. Interacts with UBC9, PIAS1 and PIAS2. Interacts with SPOCD1. Interacts with ZNF263; recruited to the SIX3 promoter along with other proteins involved in chromatin modification and transcriptional corepression where it contributes to transcriptional repression. In terms of processing, sumoylated; sumoylation disrupts the ability to interact with histone deacetylases (HDAC1 and HDAC2) and repress transcription. Auto-methylated at Cys-706: auto-methylation takes place in absence of DNA substrate and inactivates the DNA methyltransferase activity. Inactivation by auto-methylation may be used to inactivate unused DNA methyltransferases in the cell.

Its subcellular location is the nucleus. The protein localises to the chromosome. The protein resides in the cytoplasm. It carries out the reaction a 2'-deoxycytidine in DNA + S-adenosyl-L-methionine = a 5-methyl-2'-deoxycytidine in DNA + S-adenosyl-L-homocysteine + H(+). The enzyme catalyses L-cysteinyl-[protein] + S-adenosyl-L-methionine = S-methyl-L-cysteinyl-[protein] + S-adenosyl-L-homocysteine + H(+). Its activity is regulated as follows. Activated by binding to the regulatory factor DNMT3L. Auto-methylation at Cys-706 in absence of DNA inactivates the DNA methyltransferase activity. Required for genome-wide de novo methylation and is essential for the establishment of DNA methylation patterns during development. DNA methylation is coordinated with methylation of histones. It modifies DNA in a non-processive manner and also methylates non-CpG sites. May preferentially methylate DNA linker between 2 nucleosomal cores and is inhibited by histone H1. Plays a role in paternal and maternal imprinting. Required for methylation of most imprinted loci in germ cells. Acts as a transcriptional corepressor for ZBTB18. Recruited to trimethylated 'Lys-36' of histone H3 (H3K36me3) sites. Can actively repress transcription through the recruitment of HDAC activity. Also has weak auto-methylation activity on Cys-706 in absence of DNA. The polypeptide is DNA (cytosine-5)-methyltransferase 3A (Dnmt3a) (Rattus norvegicus (Rat)).